Here is a 617-residue protein sequence, read N- to C-terminus: Acyl-CoA dehydrogenase family member 11 (617 aa).

The tract at residues 1 to 47 is disordered; it reads MHRIGNAVRMASSSSANATITARHTQYSHAKTGGFSQTGPTLHNPYK. Low complexity predominate over residues 11–22; the sequence is ASSSSANATITA. Residues 23 to 41 show a composition bias toward polar residues; sequence RHTQYSHAKTGGFSQTGPT. FAD is bound by residues 206-215 and 241-243; these read QWMTEKKGGS and FSS. Ser215 is a binding site for substrate. 2 residues coordinate substrate: Ser267 and Arg334. Residues Arg359, 366-369, Glu437, Gly441, and 464-466 each bind FAD; these read QSKW and EGT.

It belongs to the acyl-CoA dehydrogenase family. As to quaternary structure, homotetramer; dimer of dimers.

Its function is as follows. Promotes adaption to elevated temperatures by regulating expression of the lipid desaturase, fat-7. Binds selectively and with high affinity to fatty acids with chain lengths from C10 to C12 and prevents them from activating fat-7 expression mediated by the nuclear hormone receptor nhr-49, leading to low levels of membrane lipid desaturation and membrane fluidity for adaption to heat. The chain is Acyl-CoA dehydrogenase family member 11 from Caenorhabditis elegans.